Here is a 176-residue protein sequence, read N- to C-terminus: bZIP transcription factor 8 (176 aa).

The disordered stretch occupies residues 44-101; that stretch reads PNTSGGSDESMSDGSKIDPKRSPKYLEKRMKNNEAAKKSRASRKHREQKNQTENELLK. Over residues 47–57 the composition is skewed to low complexity; it reads SGGSDESMSDG. The span at 58–80 shows a compositional bias: basic and acidic residues; the sequence is SKIDPKRSPKYLEKRMKNNEAAK. In terms of domain architecture, bZIP spans 65–128; that stretch reads SPKYLEKRMK…AQMQITIRDM (64 aa). Residues 67–92 are basic motif; it reads KYLEKRMKNNEAAKKSRASRKHREQK. Residues 81 to 90 show a composition bias toward basic residues; the sequence is KSRASRKHRE. Residues 91-101 are compositionally biased toward basic and acidic residues; sequence QKNQTENELLK. The leucine-zipper stretch occupies residues 100 to 107; it reads LKRKNAAL.

Belongs to the bZIP family.

The protein is bZIP transcription factor 8 (zip-8) of Caenorhabditis elegans.